The following is a 309-amino-acid chain: Ribosomal RNA small subunit methyltransferase H (309 aa).

Residues Gly33–His35, Asp53, Phe79, Asp100, and Gln107 each bind S-adenosyl-L-methionine.

Belongs to the methyltransferase superfamily. RsmH family.

Its subcellular location is the cytoplasm. It catalyses the reaction cytidine(1402) in 16S rRNA + S-adenosyl-L-methionine = N(4)-methylcytidine(1402) in 16S rRNA + S-adenosyl-L-homocysteine + H(+). Its function is as follows. Specifically methylates the N4 position of cytidine in position 1402 (C1402) of 16S rRNA. In Clostridium botulinum (strain Kyoto / Type A2), this protein is Ribosomal RNA small subunit methyltransferase H.